The sequence spans 124 residues: Small ribosomal subunit protein uS12 (124 aa).

D89 carries the 3-methylthioaspartic acid modification. The disordered stretch occupies residues 105-124 (TGVDSRMQGRSKYGTKKPKK).

Belongs to the universal ribosomal protein uS12 family. As to quaternary structure, part of the 30S ribosomal subunit. Contacts proteins S8 and S17. May interact with IF1 in the 30S initiation complex.

Functionally, with S4 and S5 plays an important role in translational accuracy. Its function is as follows. Interacts with and stabilizes bases of the 16S rRNA that are involved in tRNA selection in the A site and with the mRNA backbone. Located at the interface of the 30S and 50S subunits, it traverses the body of the 30S subunit contacting proteins on the other side and probably holding the rRNA structure together. The combined cluster of proteins S8, S12 and S17 appears to hold together the shoulder and platform of the 30S subunit. In Vesicomyosocius okutanii subsp. Calyptogena okutanii (strain HA), this protein is Small ribosomal subunit protein uS12.